The primary structure comprises 278 residues: Pca operon regulatory protein (278 aa).

An HTH iclR-type domain is found at 31–91 (VAGISKGMAI…SDGHYFYLTP (61 aa)). The H-T-H motif DNA-binding region spans 53 to 72 (ITMAAEKTGMTRAAARRHLL). One can recognise an IclR-ED domain in the interval 106–278 (LPKISQPLLN…ETARELRNIL (173 aa)).

In terms of biological role, activates transcription of the pca operon. This Acinetobacter baylyi (strain ATCC 33305 / BD413 / ADP1) protein is Pca operon regulatory protein (pcaU).